The following is a 618-amino-acid chain: 1-deoxy-D-xylulose-5-phosphate synthase (618 aa).

Thiamine diphosphate-binding positions include histidine 70 and glycine 111–serine 113. Aspartate 142 is a Mg(2+) binding site. Thiamine diphosphate is bound by residues glycine 143–serine 144, asparagine 171, tyrosine 278, and glutamate 360. Residue asparagine 171 coordinates Mg(2+).

The protein belongs to the transketolase family. DXPS subfamily. Homodimer. Mg(2+) serves as cofactor. Thiamine diphosphate is required as a cofactor.

It carries out the reaction D-glyceraldehyde 3-phosphate + pyruvate + H(+) = 1-deoxy-D-xylulose 5-phosphate + CO2. It functions in the pathway metabolic intermediate biosynthesis; 1-deoxy-D-xylulose 5-phosphate biosynthesis; 1-deoxy-D-xylulose 5-phosphate from D-glyceraldehyde 3-phosphate and pyruvate: step 1/1. Its function is as follows. Catalyzes the acyloin condensation reaction between C atoms 2 and 3 of pyruvate and glyceraldehyde 3-phosphate to yield 1-deoxy-D-xylulose-5-phosphate (DXP). In Helicobacter pylori (strain J99 / ATCC 700824) (Campylobacter pylori J99), this protein is 1-deoxy-D-xylulose-5-phosphate synthase.